Consider the following 1226-residue polypeptide: DNA-directed RNA polymerase subunit beta (1226 aa).

It belongs to the RNA polymerase beta chain family. The RNAP catalytic core consists of 2 alpha, 1 beta, 1 beta' and 1 omega subunit. When a sigma factor is associated with the core the holoenzyme is formed, which can initiate transcription.

It catalyses the reaction RNA(n) + a ribonucleoside 5'-triphosphate = RNA(n+1) + diphosphate. In terms of biological role, DNA-dependent RNA polymerase catalyzes the transcription of DNA into RNA using the four ribonucleoside triphosphates as substrates. This chain is DNA-directed RNA polymerase subunit beta, found in Leptospira interrogans serogroup Icterohaemorrhagiae serovar copenhageni (strain Fiocruz L1-130).